Consider the following 317-residue polypeptide: Uridylate kinase (317 aa).

Residue 9 to 12 (KISG) coordinates ATP. Residue Gly49 coordinates UMP. The ATP site is built by Gly50 and Arg54. UMP contacts are provided by residues Asp69 and 130–137 (TGRPYFTT). ATP-binding residues include Asn158, Tyr164, and Asp167.

It belongs to the UMP kinase family. Homohexamer.

Its subcellular location is the cytoplasm. The enzyme catalyses UMP + ATP = UDP + ADP. It functions in the pathway pyrimidine metabolism; CTP biosynthesis via de novo pathway; UDP from UMP (UMPK route): step 1/1. Its activity is regulated as follows. Inhibited by UTP. In terms of biological role, catalyzes the reversible phosphorylation of UMP to UDP. The sequence is that of Uridylate kinase from Malacoplasma penetrans (strain HF-2) (Mycoplasma penetrans).